The following is a 273-amino-acid chain: Putative pyruvate, phosphate dikinase regulatory protein (273 aa).

An ADP-binding site is contributed by 153-160 (GVSRTSKS).

This sequence belongs to the pyruvate, phosphate/water dikinase regulatory protein family. PDRP subfamily.

The enzyme catalyses N(tele)-phospho-L-histidyl/L-threonyl-[pyruvate, phosphate dikinase] + ADP = N(tele)-phospho-L-histidyl/O-phospho-L-threonyl-[pyruvate, phosphate dikinase] + AMP + H(+). It catalyses the reaction N(tele)-phospho-L-histidyl/O-phospho-L-threonyl-[pyruvate, phosphate dikinase] + phosphate + H(+) = N(tele)-phospho-L-histidyl/L-threonyl-[pyruvate, phosphate dikinase] + diphosphate. In terms of biological role, bifunctional serine/threonine kinase and phosphorylase involved in the regulation of the pyruvate, phosphate dikinase (PPDK) by catalyzing its phosphorylation/dephosphorylation. This chain is Putative pyruvate, phosphate dikinase regulatory protein, found in Ehrlichia chaffeensis (strain ATCC CRL-10679 / Arkansas).